A 515-amino-acid polypeptide reads, in one-letter code: Galactose/methyl galactoside import ATP-binding protein MglA (515 aa).

ABC transporter domains are found at residues Leu-8–Glu-243 and Ile-254–Leu-499. Position 40 to 47 (Gly-40 to Ser-47) interacts with ATP.

Belongs to the ABC transporter superfamily. Galactose/methyl galactoside importer (TC 3.A.1.2.3) family. In terms of assembly, the complex is composed of one ATP-binding protein (MglA), two transmembrane proteins (MglC) and a solute-binding protein (MglB).

It localises to the cell membrane. It carries out the reaction D-galactose(out) + ATP + H2O = D-galactose(in) + ADP + phosphate + H(+). The catalysed reaction is methyl beta-D-galactoside(out) + ATP + H2O = methyl beta-D-galactoside(in) + ADP + phosphate + H(+). Functionally, part of the ABC transporter complex MglABC involved in galactose/methyl galactoside import. Responsible for energy coupling to the transport system. The sequence is that of Galactose/methyl galactoside import ATP-binding protein MglA from Clostridium perfringens (strain ATCC 13124 / DSM 756 / JCM 1290 / NCIMB 6125 / NCTC 8237 / Type A).